The chain runs to 374 residues: MAANDRAAAPGKSGGSSGADGLMRASLSAVAPGTALRDGLERILRGNTGGLIVLGSDKTVEAMCTGGFVLDVEFTATRLRELCKLDGGIVLSSDLSKILRAGVQLVPDPMIPTEETGTRHRTADRVSKQVGFPVVSVSQSMRLVALYVDGMRRVLEDSAAILSRANQALATLERYKLRLDEVAGTLSALEIEDLVTVRDVSAVAQRLEMVRRIATEIAEYVVELGTDGRLLALQLDELIAGVEPERELVVRDYVPEPTAKRSRTVDQALYELDALTHAELLELATVAKALGYTGSPEALDSAVSPRGFRLLAKVPRLPGAIIDRLVEHFGGLQKLLAASVDDLQTVDGVGEARARSVREGLSRLAESSILERYV.

In terms of domain architecture, DAC spans 20 to 158 (DGLMRASLSA…DGMRRVLEDS (139 aa)). Residues G87, L105, and 118-122 (TRHRT) each bind ATP.

This sequence belongs to the DisA family. Homooctamer. Mg(2+) serves as cofactor.

The enzyme catalyses 2 ATP = 3',3'-c-di-AMP + 2 diphosphate. Its function is as follows. Participates in a DNA-damage check-point that is active prior to asymmetric division when DNA is damaged. DisA forms globular foci that rapidly scan along the chromosomes during sporulation, searching for lesions. When a lesion is present, DisA pauses at the lesion site. This triggers a cellular response that culminates in a temporary block in sporulation initiation. Also has diadenylate cyclase activity, catalyzing the condensation of 2 ATP molecules into cyclic di-AMP (c-di-AMP). c-di-AMP acts as a signaling molecule that couples DNA integrity with progression of sporulation. The rise in c-di-AMP level generated by DisA while scanning the chromosome, operates as a positive signal that advances sporulation; upon encountering a lesion, the DisA focus arrests at the damaged site and halts c-di-AMP synthesis. This Streptomyces avermitilis (strain ATCC 31267 / DSM 46492 / JCM 5070 / NBRC 14893 / NCIMB 12804 / NRRL 8165 / MA-4680) protein is DNA integrity scanning protein DisA.